We begin with the raw amino-acid sequence, 216 residues long: Large ribosomal subunit protein uL24m (216 aa).

Residues 1-9 (MRLSALLAL) constitute a mitochondrion transit peptide. Serine 24 carries the phosphoserine modification. The region spanning 56–89 (LFCGDMVEILEGKDAGKQGKVVQVVRQRNWVVLE) is the KOW domain.

The protein belongs to the universal ribosomal protein uL24 family. As to quaternary structure, component of the mitochondrial ribosome large subunit (39S) which comprises a 16S rRNA and about 50 distinct proteins.

It is found in the mitochondrion. This is Large ribosomal subunit protein uL24m (Mrpl24) from Mus musculus (Mouse).